The following is a 442-amino-acid chain: ORC1-type DNA replication protein 8 (442 aa).

Residues Val-66–Ala-70 and Tyr-218 each bind ATP.

This sequence belongs to the CDC6/cdc18 family.

Functionally, involved in regulation of DNA replication. The chain is ORC1-type DNA replication protein 8 (cdc6h) from Haloarcula marismortui (strain ATCC 43049 / DSM 3752 / JCM 8966 / VKM B-1809) (Halobacterium marismortui).